The chain runs to 620 residues: MQVSKRMLAGGVRSMPSPLLACWQPILLLVLGSVLSGSATGCPPRCECSAQDRAVLCHRKRFVAVPEGIPTETRLLDLGKNRIKTLNQDEFASFPHLEELELNENIVSAVEPGAFNNLFNLRTLGLRSNRLKLIPLGVFTGLSNLTKLDISENKIVILLDYMFQDLYNLKSLEVGDNDLVYISHRAFSGLNSLEQLTLEKCNLTSIPTEALSHLHGLIVLRLRHLNINAIRDYSFKRLYRLKVLEISHWPYLDTMTPNCLYGLNLTSLSITHCNLTAVPYLAVRHLVYLRFLNLSYNPISTIEGSMLHELLRLQEIQLVGGQLAVVEPYAFRGLNYLRVLNVSGNQLTTLEESVFHSVGNLETLILDSNPLACDCRLLWVFRRRWRLNFNRQQPTCATPEFVQGKEFKDFPDVLLPNYFTCRRARIRDRKAQQVFVDEGHTVQFVCRADGDPPPAILWLSPRKHLVSAKSNGRLTVFPDGTLEVRYAQVQDNGTYLCIAANAGGNDSMPAHLHVRSYSPDWPHQPNKTFAFISNQPGEGEANSTRATVPFPFDIKTLIIATTMGFISFLGVVLFCLVLLFLWSRGKGNTKHNIEIEYVPRKSDAGISSADAPRKFNMKMI.

An N-terminal signal peptide occupies residues 1-41 (MQVSKRMLAGGVRSMPSPLLACWQPILLLVLGSVLSGSATG). Cystine bridges form between cysteine 42/cysteine 48 and cysteine 46/cysteine 57. One can recognise an LRRNT domain in the interval 42-71 (CPPRCECSAQDRAVLCHRKRFVAVPEGIPT). The Extracellular segment spans residues 42 to 561 (CPPRCECSAQ…FDIKTLIIAT (520 aa)). LRR repeat units follow at residues 72–93 (ETRL…EFAS), 96–117 (HLEE…AFNN), 120–141 (NLRT…VFTG), 144–165 (NLTK…MFQD), 168–189 (NLKS…AFSG), 192–213 (SLEQ…ALSH), 216–237 (GLIV…SFKR), 264–285 (NLTS…AVRH), 288–309 (YLRF…MLHE), 312–333 (RLQE…AFRG), and 336–357 (YLRV…VFHS). A glycan (N-linked (GlcNAc...) asparagine) is linked at asparagine 144. Asparagine 202 carries an N-linked (GlcNAc...) asparagine glycan. Residues asparagine 264, asparagine 274, and asparagine 293 are each glycosylated (N-linked (GlcNAc...) asparagine). Asparagine 341 carries N-linked (GlcNAc...) asparagine glycosylation. Positions 369-423 (NPLACDCRLLWVFRRRWRLNFNRQQPTCATPEFVQGKEFKDFPDVLLPNYFTCRR) constitute an LRRCT domain. Disulfide bonds link cysteine 373-cysteine 396, cysteine 375-cysteine 421, and cysteine 446-cysteine 497. An Ig-like C2-type domain is found at 411-513 (PDVLLPNYFT…GNDSMPAHLH (103 aa)). N-linked (GlcNAc...) asparagine glycans are attached at residues asparagine 492, asparagine 505, asparagine 526, and asparagine 542. Residues 562–582 (TMGFISFLGVVLFCLVLLFLW) form a helical membrane-spanning segment. Residues 583 to 620 (SRGKGNTKHNIEIEYVPRKSDAGISSADAPRKFNMKMI) are Cytoplasmic-facing. Serine 602 is modified (phosphoserine).

In terms of assembly, homotetramer. Forms a ternary complex with RTN4R/NGFR and RTN4R/TNFRSF19. Interacts with NGRF and MYT1L. Interacts with RTN4R. N-glycosylated. Contains predominantly high-mannose glycans. As to expression, expressed exclusively in the central nervous system. Highest level in the in amygdala, hippocampus, thalamus and cerebral cortex. In the rest of the brain a basal expression seems to be always present. Up-regulated in substantia nigra neurons from Parkinson disease patients.

The protein resides in the cell membrane. Functionally, functional component of the Nogo receptor signaling complex (RTN4R/NGFR) in RhoA activation responsible for some inhibition of axonal regeneration by myelin-associated factors. Is also an important negative regulator of oligodentrocyte differentiation and axonal myelination. Acts in conjunction with RTN4 and RTN4R in regulating neuronal precursor cell motility during cortical development. The polypeptide is Leucine-rich repeat and immunoglobulin-like domain-containing nogo receptor-interacting protein 1 (LINGO1) (Homo sapiens (Human)).